Here is a 300-residue protein sequence, read N- to C-terminus: Protoheme IX farnesyltransferase 1 (300 aa).

Transmembrane regions (helical) follow at residues V28 to L48, V54 to I74, A100 to N120, L122 to L142, N149 to T169, A176 to I196, C222 to M242, S243 to W263, and F280 to A300.

This sequence belongs to the UbiA prenyltransferase family. Protoheme IX farnesyltransferase subfamily.

The protein localises to the cell inner membrane. It carries out the reaction heme b + (2E,6E)-farnesyl diphosphate + H2O = Fe(II)-heme o + diphosphate. It functions in the pathway porphyrin-containing compound metabolism; heme O biosynthesis; heme O from protoheme: step 1/1. In terms of biological role, converts heme B (protoheme IX) to heme O by substitution of the vinyl group on carbon 2 of heme B porphyrin ring with a hydroxyethyl farnesyl side group. The polypeptide is Protoheme IX farnesyltransferase 1 (Shewanella sp. (strain MR-4)).